We begin with the raw amino-acid sequence, 158 residues long: D-aminoacyl-tRNA deacylase (158 aa).

Residues 138 to 139 (GP) carry the Gly-cisPro motif, important for rejection of L-amino acids motif.

Belongs to the DTD family. Homodimer.

Its subcellular location is the cytoplasm. It catalyses the reaction glycyl-tRNA(Ala) + H2O = tRNA(Ala) + glycine + H(+). It carries out the reaction a D-aminoacyl-tRNA + H2O = a tRNA + a D-alpha-amino acid + H(+). In terms of biological role, an aminoacyl-tRNA editing enzyme that deacylates mischarged D-aminoacyl-tRNAs. Hydrolyzes correctly charged, achiral, glycyl-tRNA(Gly). Deacylates mischarged endogenous and E.coli glycyl-tRNA(Ala), protecting cells against glycine mischarging by AlaRS. Acts via tRNA-based rather than protein-based catalysis; rejects L-amino acids rather than detecting D-amino acids in the active site. By recycling D-aminoacyl-tRNA to D-amino acids and free tRNA molecules, this enzyme counteracts the toxicity associated with the formation of D-aminoacyl-tRNA entities in vivo and helps enforce protein L-homochirality. The polypeptide is D-aminoacyl-tRNA deacylase (Drosophila melanogaster (Fruit fly)).